A 149-amino-acid polypeptide reads, in one-letter code: 3-dehydroquinate dehydratase (149 aa).

The active-site Proton acceptor is Tyr24. Asn75, His81, and Asp88 together coordinate substrate. His101 serves as the catalytic Proton donor. Residues 102-103 (LS) and Arg112 each bind substrate.

This sequence belongs to the type-II 3-dehydroquinase family. As to quaternary structure, homododecamer.

The catalysed reaction is 3-dehydroquinate = 3-dehydroshikimate + H2O. The protein operates within metabolic intermediate biosynthesis; chorismate biosynthesis; chorismate from D-erythrose 4-phosphate and phosphoenolpyruvate: step 3/7. Its function is as follows. Catalyzes a trans-dehydration via an enolate intermediate. The chain is 3-dehydroquinate dehydratase from Bartonella tribocorum (strain CIP 105476 / IBS 506).